The sequence spans 556 residues: Genetic interactor of prohibitins 3, mitochondrial (556 aa).

The N-terminal 21 residues, M1 to K21, are a transit peptide targeting the mitochondrion. In terms of domain architecture, CP-type G spans E113 to S305.

Belongs to the TRAFAC class YlqF/YawG GTPase family. GEP3 subfamily.

Its subcellular location is the mitochondrion. Functionally, interacts genetically with prohibitins and thus may be involved in the mitochondrial lipid metabolism. The polypeptide is Genetic interactor of prohibitins 3, mitochondrial (GEP3) (Saccharomyces cerevisiae (strain YJM789) (Baker's yeast)).